The primary structure comprises 336 residues: Holliday junction branch migration complex subunit RuvB (336 aa).

The segment at 1–181 is large ATPase domain (RuvB-L); the sequence is MDRIVEIEKV…FGMDFRLQFY (181 aa). ATP-binding positions include Leu-20, Arg-21, Gly-62, Lys-65, Thr-66, Thr-67, 128–130, Arg-171, Tyr-181, and Arg-218; that span reads EDF. Thr-66 provides a ligand contact to Mg(2+). Residues 182-252 are small ATPAse domain (RuvB-S); sequence TSSELSRIVQ…RAKEGLNALG (71 aa). The interval 255-336 is head domain (RuvB-H); it reads SLGFDEMDIR…KIDIEKGLFE (82 aa). 2 residues coordinate DNA: Arg-309 and Arg-314.

This sequence belongs to the RuvB family. As to quaternary structure, homohexamer. Forms an RuvA(8)-RuvB(12)-Holliday junction (HJ) complex. HJ DNA is sandwiched between 2 RuvA tetramers; dsDNA enters through RuvA and exits via RuvB. An RuvB hexamer assembles on each DNA strand where it exits the tetramer. Each RuvB hexamer is contacted by two RuvA subunits (via domain III) on 2 adjacent RuvB subunits; this complex drives branch migration. In the full resolvosome a probable DNA-RuvA(4)-RuvB(12)-RuvC(2) complex forms which resolves the HJ.

The protein resides in the cytoplasm. It catalyses the reaction ATP + H2O = ADP + phosphate + H(+). In terms of biological role, the RuvA-RuvB-RuvC complex processes Holliday junction (HJ) DNA during genetic recombination and DNA repair, while the RuvA-RuvB complex plays an important role in the rescue of blocked DNA replication forks via replication fork reversal (RFR). RuvA specifically binds to HJ cruciform DNA, conferring on it an open structure. The RuvB hexamer acts as an ATP-dependent pump, pulling dsDNA into and through the RuvAB complex. RuvB forms 2 homohexamers on either side of HJ DNA bound by 1 or 2 RuvA tetramers; 4 subunits per hexamer contact DNA at a time. Coordinated motions by a converter formed by DNA-disengaged RuvB subunits stimulates ATP hydrolysis and nucleotide exchange. Immobilization of the converter enables RuvB to convert the ATP-contained energy into a lever motion, pulling 2 nucleotides of DNA out of the RuvA tetramer per ATP hydrolyzed, thus driving DNA branch migration. The RuvB motors rotate together with the DNA substrate, which together with the progressing nucleotide cycle form the mechanistic basis for DNA recombination by continuous HJ branch migration. Branch migration allows RuvC to scan DNA until it finds its consensus sequence, where it cleaves and resolves cruciform DNA. The protein is Holliday junction branch migration complex subunit RuvB of Campylobacter concisus (strain 13826).